Consider the following 417-residue polypeptide: RH-like protein IA (417 aa).

A run of 11 helical transmembrane segments spans residues 12 to 32 (CLPL…YFFT), 44 to 64 (LVAS…GFGF), 77 to 97 (VAFS…LDGF), 125 to 145 (ISVD…MVLV), 172 to 192 (IYVF…KPLP), 203 to 223 (TIPS…WPSF), 238 to 258 (VFNT…GSSL), 265 to 285 (ISMS…GTSC), 287 to 307 (LITS…ISIG), 331 to 351 (NFSL…VHHT), and 358 to 378 (MIGF…TIAL).

This sequence belongs to the ammonium transporter (TC 2.A.49) family. Rh subfamily.

The protein localises to the membrane. Functionally, may be part of an oligomeric complex which is likely to have a transport or channel function in the erythrocyte membrane. This is RH-like protein IA from Pan troglodytes (Chimpanzee).